The primary structure comprises 201 residues: Small ribosomal subunit protein uS2 (201 aa).

This sequence belongs to the universal ribosomal protein uS2 family.

The protein is Small ribosomal subunit protein uS2 of Nanoarchaeum equitans (strain Kin4-M).